The chain runs to 361 residues: MLFEFARWLQQFESLFGLFNYLTFRSILAALTALFLSLWIGPVLIQKLSQFKGGQPIRQDGPKMHFSKAGTPTMGGSLILMTVTLSVLLWGDLRNRYVWLVLVVMLAFGAIGWYDDWIKLARRDPNGLKSRWKYLLQSIFGLAAGLFLYFTADVPAAVTFYIPMFKSIALPLTSISFVAITYFWIVGFSNAVNLTDGLDGLAIMPTVLVACALGVFAYASGNTLFSSYLKIPTIPGAGDLIIICAAIAGAGLGFLWFNAYPAMVFMGDIGALALGAVLGTIAVIVRQELVLVVMGGVFVIETLSVIIQVTSFKLTGKRVFRMAPIHHHFELKGWPEPRVIVRFWIISVVLVLVGLATLKVR.

10 helical membrane-spanning segments follow: residues 26–46 (SILAALTALFLSLWIGPVLIQ), 73–93 (TMGGSLILMTVTLSVLLWGDL), 98–118 (VWLVLVVMLAFGAIGWYDDWI), 139–159 (IFGLAAGLFLYFTADVPAAVT), 168–188 (IALPLTSISFVAITYFWIVGF), 200–220 (GLAIMPTVLVACALGVFAYAS), 237–257 (AGDLIIICAAIAGAGLGFLWF), 264–284 (VFMGDIGALALGAVLGTIAVI), 289–309 (LVLVVMGGVFVIETLSVIIQV), and 339–359 (VIVRFWIISVVLVLVGLATLK).

It belongs to the glycosyltransferase 4 family. MraY subfamily. The cofactor is Mg(2+).

Its subcellular location is the cell inner membrane. The enzyme catalyses UDP-N-acetyl-alpha-D-muramoyl-L-alanyl-gamma-D-glutamyl-meso-2,6-diaminopimeloyl-D-alanyl-D-alanine + di-trans,octa-cis-undecaprenyl phosphate = di-trans,octa-cis-undecaprenyl diphospho-N-acetyl-alpha-D-muramoyl-L-alanyl-D-glutamyl-meso-2,6-diaminopimeloyl-D-alanyl-D-alanine + UMP. It functions in the pathway cell wall biogenesis; peptidoglycan biosynthesis. Functionally, catalyzes the initial step of the lipid cycle reactions in the biosynthesis of the cell wall peptidoglycan: transfers peptidoglycan precursor phospho-MurNAc-pentapeptide from UDP-MurNAc-pentapeptide onto the lipid carrier undecaprenyl phosphate, yielding undecaprenyl-pyrophosphoryl-MurNAc-pentapeptide, known as lipid I. This chain is Phospho-N-acetylmuramoyl-pentapeptide-transferase, found in Xylella fastidiosa (strain M12).